The chain runs to 254 residues: DNA repair protein RecO (254 aa).

Belongs to the RecO family.

Functionally, involved in DNA repair and RecF pathway recombination. The protein is DNA repair protein RecO of Anaeromyxobacter dehalogenans (strain 2CP-1 / ATCC BAA-258).